The following is a 144-amino-acid chain: Interferon-induced transmembrane protein 2 (144 aa).

Residue M1 is modified to N-acetylmethionine. Residues 1 to 56 (MSHNSQAFLSTNAGLPPSYETIKEEYGVTELGEPSNSAVVRTTVINMPREVSVPDH) lie on the Cytoplasmic side of the membrane. Residue Y19 is modified to Phosphotyrosine. An intramembrane region (helical) is located at residues 57 to 77 (VVWSLFNTLFFNACCLGFVAY). S-palmitoyl cysteine attachment occurs at residues C70, C71, and C104. Residues 78 to 110 (AYSVKSRDRKMVGDVVGAQAYASTAKCLNISSL) are Cytoplasmic-facing. A helical transmembrane segment spans residues 111–131 (IFSILMVIICIIIFSTTSVVV). Residues 132–144 (FQSFAQRTPHSGF) are Extracellular-facing.

It belongs to the CD225/Dispanin family. Interacts with CD81. Post-translationally, palmitoylation on membrane-proximal cysteines controls clustering in membrane compartments and antiviral activity. Phosphorylation at Tyr-19 is required for endosomal and lysosomal location. As to expression, predominantly expressed in nascent primordial germ cells, as well as in gonadal germ cells.

Its subcellular location is the cell membrane. It localises to the lysosome membrane. The protein localises to the late endosome membrane. Functionally, IFN-induced antiviral protein which inhibits the entry of viruses to the host cell cytoplasm, permitting endocytosis, but preventing subsequent viral fusion and release of viral contents into the cytosol. Active against multiple viruses, including influenza A virus, SARS coronavirus (SARS-CoV), Marburg virus (MARV) and Ebola virus (EBOV), Dengue virus (DNV) and West Nile virus (WNV). Can inhibit: influenza virus hemagglutinin protein-mediated viral entry, MARV and EBOV GP1,2-mediated viral entry and SARS-CoV S protein-mediated viral entry. Induces cell cycle arrest and mediates apoptosis by caspase activation and in p53-independent manner. This is Interferon-induced transmembrane protein 2 (Ifitm2) from Mus musculus (Mouse).